The sequence spans 247 residues: Sugar fermentation stimulation protein homolog (247 aa).

The protein belongs to the SfsA family.

In Aeromonas salmonicida (strain A449), this protein is Sugar fermentation stimulation protein homolog.